Consider the following 200-residue polypeptide: Recombination protein RecR (200 aa).

Residues 59 to 74 (CEKCNTFTEAQICEVC) form a C4-type zinc finger. The region spanning 82–177 (ALLCVVETPA…AVTRLARGVP (96 aa)) is the Toprim domain.

It belongs to the RecR family.

Functionally, may play a role in DNA repair. It seems to be involved in an RecBC-independent recombinational process of DNA repair. It may act with RecF and RecO. This Burkholderia mallei (strain NCTC 10247) protein is Recombination protein RecR.